The chain runs to 68 residues: Large ribosomal subunit protein uL29 (68 aa).

The protein belongs to the universal ribosomal protein uL29 family.

The chain is Large ribosomal subunit protein uL29 from Persephonella marina (strain DSM 14350 / EX-H1).